The following is a 297-amino-acid chain: MLYQQIQSNKRRTIVLLFVFFILVALVGAAVGYLLLNSLETGVVAAIVIGAIYTIIMVSNSTNVVMAMNHGHEIKNADQAPELWHTVEDMAMVAQVPMPRVFIIDDDSPNAFATGNNPEHSAVAATTGLLKIMNRSELEGVIAHEMSHVRNYDIRISTIALALAAAITLLTNIGGNWWFWGSGDRRRNDDRNGGGGLQILLLVFSILMMVLAPLAAAAIQMAISRNREYLADAGSAELTRNPQGLISALRKLGNAQPMKDVDSSSAALYISNPLKNKERLFDTHPPIEERIDRLEKM.

The next 2 helical transmembrane spans lie at 14 to 34 and 38 to 58; these read IVLLFVFFILVALVGAAVGYL and SLETGVVAAIVIGAIYTIIMV. Histidine 144 contributes to the Zn(2+) binding site. Glutamate 145 is an active-site residue. Histidine 148 contributes to the Zn(2+) binding site. Helical transmembrane passes span 159-179 and 199-219; these read IALALAAAITLLTNIGGNWWF and ILLLVFSILMMVLAPLAAAAI. Residue glutamate 228 participates in Zn(2+) binding.

Belongs to the peptidase M48B family. It depends on Zn(2+) as a cofactor.

It is found in the cell membrane. This chain is Protease HtpX homolog, found in Leuconostoc mesenteroides subsp. mesenteroides (strain ATCC 8293 / DSM 20343 / BCRC 11652 / CCM 1803 / JCM 6124 / NCDO 523 / NBRC 100496 / NCIMB 8023 / NCTC 12954 / NRRL B-1118 / 37Y).